The following is a 162-amino-acid chain: 2-C-methyl-D-erythritol 2,4-cyclodiphosphate synthase (162 aa).

A divalent metal cation contacts are provided by aspartate 10 and histidine 12. Residues 10–12 and 36–37 each bind 4-CDP-2-C-methyl-D-erythritol 2-phosphate; these read DVH and HS. Histidine 44 provides a ligand contact to a divalent metal cation. 4-CDP-2-C-methyl-D-erythritol 2-phosphate-binding positions include 58 to 60, 63 to 67, and arginine 144; these read DIG and FSDTD.

The protein belongs to the IspF family. As to quaternary structure, homotrimer. A divalent metal cation is required as a cofactor.

It carries out the reaction 4-CDP-2-C-methyl-D-erythritol 2-phosphate = 2-C-methyl-D-erythritol 2,4-cyclic diphosphate + CMP. The protein operates within isoprenoid biosynthesis; isopentenyl diphosphate biosynthesis via DXP pathway; isopentenyl diphosphate from 1-deoxy-D-xylulose 5-phosphate: step 4/6. Its function is as follows. Involved in the biosynthesis of isopentenyl diphosphate (IPP) and dimethylallyl diphosphate (DMAPP), two major building blocks of isoprenoid compounds. Catalyzes the conversion of 4-diphosphocytidyl-2-C-methyl-D-erythritol 2-phosphate (CDP-ME2P) to 2-C-methyl-D-erythritol 2,4-cyclodiphosphate (ME-CPP) with a corresponding release of cytidine 5-monophosphate (CMP). The chain is 2-C-methyl-D-erythritol 2,4-cyclodiphosphate synthase from Burkholderia thailandensis (strain ATCC 700388 / DSM 13276 / CCUG 48851 / CIP 106301 / E264).